The sequence spans 407 residues: DNA-directed RNA polymerase subunit Rpo1C (407 aa).

It belongs to the RNA polymerase beta' chain family. Part of the RNA polymerase complex.

It localises to the cytoplasm. The enzyme catalyses RNA(n) + a ribonucleoside 5'-triphosphate = RNA(n+1) + diphosphate. DNA-dependent RNA polymerase (RNAP) catalyzes the transcription of DNA into RNA using the four ribonucleoside triphosphates as substrates. Forms part of the jaw domain. This is DNA-directed RNA polymerase subunit Rpo1C from Aeropyrum pernix (strain ATCC 700893 / DSM 11879 / JCM 9820 / NBRC 100138 / K1).